Reading from the N-terminus, the 220-residue chain is Type II restriction enzyme NspV (220 aa).

It catalyses the reaction Endonucleolytic cleavage of DNA to give specific double-stranded fragments with terminal 5'-phosphates.. Functionally, a P subtype restriction enzyme that recognizes the double-stranded sequence 5'-TTCGAA-3' and cleaves after T-2. The sequence is that of Type II restriction enzyme NspV from Nostoc sp. (strain ATCC 29411 / PCC 7524).